The chain runs to 1461 residues: DNA topoisomerase 2 (1461 aa).

The span at 1–17 (MSESESDYFTDGSEDDF) shows a compositional bias: acidic residues. Residues 1–61 (MSESESDYFT…TPKPTNASET (61 aa)) are disordered. Residues 41 to 52 (TNSTVSSSRSST) are compositionally biased toward low complexity. Residues Asn-120, Asn-149, 177–179 (SSN), and 190–197 (GRNGFGAK) contribute to the ATP site. The tract at residues 382–389 (SKKEKGKK) is interaction with DNA. 418–420 (QTK) is a binding site for ATP. The Toprim domain maps to 498-614 (CTLILTEGLS…GLLDIPGFLL (117 aa)). The Mg(2+) site is built by Glu-504, Asp-583, and Asp-585. A Topo IIA-type catalytic domain is found at 752 to 1226 (IPSVLDGFKP…SAKDLWNQDL (475 aa)). The active-site O-(5'-phospho-DNA)-tyrosine intermediate is Tyr-842. Residues 1024–1033 (KLVSSLSLAN) form an interaction with DNA region. Disordered regions lie at residues 1122–1155 (DGKP…DVGN) and 1244–1461 (RESL…IVDE). Acidic residues predominate over residues 1133–1153 (LTGDDADEEEETQEQEGDEDV). Residues 1251–1261 (GKKKSTKRRAK) show a composition bias toward basic residues. 2 stretches are compositionally biased toward basic and acidic residues: residues 1274–1283 (VKVEPKEKKS) and 1406–1417 (DKPEPKERRTRE). Acidic residues predominate over residues 1434–1461 (DSDDEDEDEEDDIVMSDGDDDDDFIVDE).

Belongs to the type II topoisomerase family. Homodimer. Mg(2+) is required as a cofactor. It depends on Mn(2+) as a cofactor. Ca(2+) serves as cofactor.

It localises to the nucleus. It carries out the reaction ATP-dependent breakage, passage and rejoining of double-stranded DNA.. Control of topological states of DNA by transient breakage and subsequent rejoining of DNA strands. Topoisomerase II makes double-strand breaks. This chain is DNA topoisomerase 2 (TOP2), found in Candida albicans (Yeast).